The chain runs to 906 residues: Probable RNA-directed DNA polymerase from transposon BS (906 aa).

The Reverse transcriptase domain occupies Ala482–Leu758.

The cofactor is Mg(2+). It depends on Mn(2+) as a cofactor.

It carries out the reaction DNA(n) + a 2'-deoxyribonucleoside 5'-triphosphate = DNA(n+1) + diphosphate. The protein is Probable RNA-directed DNA polymerase from transposon BS of Drosophila melanogaster (Fruit fly).